Reading from the N-terminus, the 196-residue chain is Large ribosomal subunit protein bL9 (196 aa).

The interval Gln174–Ala196 is disordered. A compositionally biased stretch (polar residues) spans Gln186–Ala196.

The protein belongs to the bacterial ribosomal protein bL9 family.

Its function is as follows. Binds to the 23S rRNA. This is Large ribosomal subunit protein bL9 from Phenylobacterium zucineum (strain HLK1).